Consider the following 115-residue polypeptide: uncharacterized protein (115 aa).

This is an uncharacterized protein from Acidianus sp. F28 (AFV-2).